A 1700-amino-acid chain; its full sequence is Rho guanine nucleotide exchange factor 28 (1700 aa).

Positions 288–335 are disordered; that stretch reads TERATMPSGAAETEEEVRNLESGRSPSEEEEDGQLVKSQADGPSEQED. Phosphoserine is present on residues S312, S314, and S478. The segment at 483-525 is disordered; the sequence is VADSEEEGRSEPPICYAVGSQSSPRTGLPGGDELDSFDANTEP. Position 623 is a phosphoserine (S623). A Phorbol-ester/DAG-type zinc finger spans residues 651–698; that stretch reads RHQFVPGTFSGVLQCSGCDKTLLGKESLQCANCKANTHKGCKDTVPPC. A compositionally biased stretch (polar residues) spans 709–720; the sequence is NKPQTILGSSSV. Disordered regions lie at residues 709–761 and 774–799; these read NKPQ…VPGT and ESEGDSNSWRSRSHSDELFQSMGSSP. The span at 728 to 737 shows a compositional bias: low complexity; the sequence is LSLHPSPSMP. A compositionally biased stretch (polar residues) spans 774 to 783; it reads ESEGDSNSWR. The region spanning 848–1043 is the DH domain; sequence KRQDVIFELM…KDMIAAVDLK (196 aa). Positions 1085 to 1187 constitute a PH domain; that stretch reads ALLHDGLVYW…WMRRIQQAVE (103 aa). The disordered stretch occupies residues 1186–1207; that stretch reads VESCPEEEGGRTSESDEERRKA. Positions 1193 to 1207 are enriched in basic and acidic residues; that stretch reads EGGRTSESDEERRKA. The tract at residues 1294–1303 is interaction with PTK2/FAK1; required for regulation of axonal branching and synapse formation; that stretch reads DVSQPSEEGP. The mediates cytoplasmic retention and interaction with YWHAH stretch occupies residues 1369–1380; that stretch reads IIQAIQNLTRLL. The segment at 1421-1700 is interaction with microtubules; the sequence is QEKSRYLEKH…DGAEENIVYL (280 aa). Residues 1473–1522 adopt a coiled-coil conformation; it reads ERECQSQEELLLRHRSELDHQLQEYQQNLERLREGQRMVERERQRMRDQQ. Residues 1493-1524 are RNA-binding; sequence QLQEYQQNLERLREGQRMVERERQRMRDQQGL. A Phosphoserine modification is found at S1535. The interval 1563-1576 is mediates cytoplasmic retention and interaction with MAPK8IP1; it reads FLNDAFTHMSLNTS. Residues 1574–1598 form a disordered region; that stretch reads NTSNKPNPSGAPWDAHPPGGSHLDL. S1604 carries the phosphoserine modification. Positions 1612–1700 are disordered; sequence VSQPSDVNSE…DGAEENIVYL (89 aa). The span at 1613–1623 shows a compositional bias: polar residues; the sequence is SQPSDVNSELW. A compositionally biased stretch (basic and acidic residues) spans 1633 to 1642; it reads ARQESIKDSC. Positions 1647–1672 are enriched in polar residues; that stretch reads DLNSFQTESPDPQDSNQRGPQPQTLI.

As to quaternary structure, homooligomer; forms cytoplasmic aggregates. Forms a complex with MAPK8 and MAPK8IP1. Interacts with RHOA. Interacts with microtubules. Interacts with YWHAE and YWHAH. Interacts with PTK2/FAK1. Interacts with NEFL. Interacts with CTNND2; prevents interaction with RHOA. Post-translationally, phosphorylated on tyrosine upon stimulation of cells by laminin.

Its subcellular location is the cytoplasm. It is found in the cell membrane. Functions as a RHOA-specific guanine nucleotide exchange factor regulating signaling pathways downstream of integrins and growth factor receptors. Functions in axonal branching, synapse formation and dendritic morphogenesis. Also functions in focal adhesion formation, cell motility and B-lymphocytes activation. May regulate NEFL expression and aggregation and play a role in apoptosis. The protein is Rho guanine nucleotide exchange factor 28 (Arhgef28) of Rattus norvegicus (Rat).